The sequence spans 241 residues: MAKQPHLLVEEGDVHEIAIIPGDPGRVDRIADLCDDSELVAQNREYKIVNASYDGTDLTICSTGIGCPSAAIAVEELSRVGVETFLRCGTCGALQADMEVGDMVVATGAAKEEGTSKRYESVEYPAVPDYDALTELVGAAEDNDEEIHVGPIVSDDAFYNESDEYVDDWNDANLLAIEMEAATVFALARRKGLRAGAICTVDGNLVAGNQKGADSDDELPEKAKDNVERAIRITLNAVTAL.

Belongs to the PNP/UDP phosphorylase family.

It carries out the reaction guanosine + phosphate = alpha-D-ribose 1-phosphate + guanine. It catalyses the reaction a purine D-ribonucleoside + phosphate = a purine nucleobase + alpha-D-ribose 1-phosphate. The catalysed reaction is inosine + phosphate = alpha-D-ribose 1-phosphate + hypoxanthine. The enzyme catalyses adenosine + phosphate = alpha-D-ribose 1-phosphate + adenine. With respect to regulation, activity is higher at low KCl concentrations. Functionally, phosphorylase involved in the non-carboxylating pentose bisphosphate pathway, a nucleoside degradation pathway present in some halophilic archaea. Catalyzes the phosphorolytic cleavage of guanosine to guanine and ribose-1-phosphate (R1P). Exhibits the highest activity toward guanosine, but also shows lower activity against inosine and adenosine. The polypeptide is Guanosine phosphorylase (Halorubrum lacusprofundi (strain ATCC 49239 / DSM 5036 / JCM 8891 / ACAM 34)).